Here is a 531-residue protein sequence, read N- to C-terminus: Tryptophan 6-halogenase ThaL (531 aa).

Gly-13, Thr-15, Ala-16, Ala-39, Ile-42, Ile-45, Val-47, and Ala-50 together coordinate FAD. Lys-79 is an active-site residue. Pro-111 serves as a coordination point for L-tryptophan. 2 residues coordinate FAD: Met-198 and Leu-349. Residues Ser-360 and Gly-361 each contribute to the chloride site. An FAD-binding site is contributed by Ile-362. L-tryptophan contacts are provided by Tyr-454, Tyr-455, Glu-461, and Phe-465.

The protein belongs to the flavin-dependent halogenase family. Bacterial tryptophan halogenase subfamily. Homodimer. Monomer in solution.

The catalysed reaction is L-tryptophan + FADH2 + chloride + O2 = 6-chloro-L-tryptophan + FAD + 2 H2O. The enzyme catalyses D-tryptophan + FADH2 + chloride + O2 = 6-chloro-D-tryptophan + FAD + 2 H2O. Its function is as follows. Involved in the biosynthesis of thienodolin, a plant growth-regulating compound. Catalyzes the chlorination of tryptophan (Trp) at C6 position to yield 6-chloro-tryptophan. It is also able to use bromide ions to generate monobrominated Trp. In vitro, accepts a wide range of amides and peptides carrying either L- or D-Trp at the N-terminus. The chain is Tryptophan 6-halogenase ThaL from Streptomyces albogriseolus.